A 291-amino-acid polypeptide reads, in one-letter code: Cytosolic Fe-S cluster assembly factor CFD1 (291 aa).

Residue 24 to 31 (GKGGVGKS) coordinates ATP. [4Fe-4S] cluster-binding residues include C199 and C202. Residues 270–291 (ENEEEAKETAEEEKSRAATNGQ) form a disordered region. Residues 276–285 (KETAEEEKSR) show a composition bias toward basic and acidic residues.

The protein belongs to the Mrp/NBP35 ATP-binding proteins family. NUBP2/CFD1 subfamily. Heterotetramer of 2 NBP35 and 2 CFD1 chains. [4Fe-4S] cluster serves as cofactor.

It is found in the cytoplasm. Its function is as follows. Component of the cytosolic iron-sulfur (Fe/S) protein assembly (CIA) machinery. Required for maturation of extramitochondrial Fe-S proteins. The NBP35-CFD1 heterotetramer forms a Fe-S scaffold complex, mediating the de novo assembly of an Fe-S cluster and its transfer to target apoproteins. Required for biogenesis and export of both ribosomal subunits, which may reflect a role in assembly of the Fe/S clusters in RLI1, a protein which performs rRNA processing and ribosome export. The sequence is that of Cytosolic Fe-S cluster assembly factor CFD1 from Yarrowia lipolytica (strain CLIB 122 / E 150) (Yeast).